We begin with the raw amino-acid sequence, 432 residues long: Adenylosuccinate synthetase (432 aa).

GTP is bound by residues 13–19 and 41–43; these read GDEGKGK and GHT. Residue D14 is the Proton acceptor of the active site. Mg(2+)-binding residues include D14 and G41. IMP is bound by residues 14–17, 39–42, T130, R144, Q225, T240, and R304; these read DEGK and NAGH. The active-site Proton donor is the H42. 300–306 contacts substrate; it reads ATTGRRR. Residues R306, 332 to 334, and 415 to 417 contribute to the GTP site; these read KLD and STG.

It belongs to the adenylosuccinate synthetase family. As to quaternary structure, homodimer. The cofactor is Mg(2+).

Its subcellular location is the cytoplasm. It carries out the reaction IMP + L-aspartate + GTP = N(6)-(1,2-dicarboxyethyl)-AMP + GDP + phosphate + 2 H(+). The protein operates within purine metabolism; AMP biosynthesis via de novo pathway; AMP from IMP: step 1/2. Plays an important role in the de novo pathway of purine nucleotide biosynthesis. Catalyzes the first committed step in the biosynthesis of AMP from IMP. This Cronobacter sakazakii (strain ATCC BAA-894) (Enterobacter sakazakii) protein is Adenylosuccinate synthetase.